Consider the following 418-residue polypeptide: Gamma-glutamyl phosphate reductase (418 aa).

It belongs to the gamma-glutamyl phosphate reductase family.

It localises to the cytoplasm. It carries out the reaction L-glutamate 5-semialdehyde + phosphate + NADP(+) = L-glutamyl 5-phosphate + NADPH + H(+). Its pathway is amino-acid biosynthesis; L-proline biosynthesis; L-glutamate 5-semialdehyde from L-glutamate: step 2/2. In terms of biological role, catalyzes the NADPH-dependent reduction of L-glutamate 5-phosphate into L-glutamate 5-semialdehyde and phosphate. The product spontaneously undergoes cyclization to form 1-pyrroline-5-carboxylate. This is Gamma-glutamyl phosphate reductase from Citrifermentans bemidjiense (strain ATCC BAA-1014 / DSM 16622 / JCM 12645 / Bem) (Geobacter bemidjiensis).